Consider the following 479-residue polypeptide: Ribulose bisphosphate carboxylase large chain (479 aa).

Residues 1–2 (MS) constitute a propeptide that is removed on maturation. At P3 the chain carries N-acetylproline. N6,N6,N6-trimethyllysine is present on K14. Positions 123 and 173 each coordinate substrate. K175 functions as the Proton acceptor in the catalytic mechanism. K177 is a binding site for substrate. 3 residues coordinate Mg(2+): K201, D203, and E204. K201 carries the N6-carboxylysine modification. The Proton acceptor role is filled by H294. Substrate contacts are provided by R295, H327, and S379.

The protein belongs to the RuBisCO large chain family. Type I subfamily. In terms of assembly, heterohexadecamer of 8 large chains and 8 small chains. Mg(2+) serves as cofactor.

Its subcellular location is the plastid. The protein resides in the chloroplast. The enzyme catalyses 2 (2R)-3-phosphoglycerate + 2 H(+) = D-ribulose 1,5-bisphosphate + CO2 + H2O. The catalysed reaction is D-ribulose 1,5-bisphosphate + O2 = 2-phosphoglycolate + (2R)-3-phosphoglycerate + 2 H(+). RuBisCO catalyzes two reactions: the carboxylation of D-ribulose 1,5-bisphosphate, the primary event in carbon dioxide fixation, as well as the oxidative fragmentation of the pentose substrate in the photorespiration process. Both reactions occur simultaneously and in competition at the same active site. This Jasminum nudiflorum (Winter jasmine) protein is Ribulose bisphosphate carboxylase large chain.